We begin with the raw amino-acid sequence, 131 residues long: Translation initiation factor 5A (131 aa).

The residue at position 36 (K36) is a Hypusine.

The protein belongs to the eIF-5A family.

The protein localises to the cytoplasm. Functions by promoting the formation of the first peptide bond. This chain is Translation initiation factor 5A (eIF5A), found in Saccharolobus islandicus (strain Y.N.15.51 / Yellowstone #2) (Sulfolobus islandicus).